The chain runs to 242 residues: Ribose-5-phosphate isomerase A (242 aa).

Residues 39 to 42, 95 to 98, and 108 to 111 contribute to the substrate site; these read SGST, DGAD, and KGGG. Glu-117 serves as the catalytic Proton acceptor. Residue Lys-135 coordinates substrate.

This sequence belongs to the ribose 5-phosphate isomerase family. In terms of assembly, homodimer.

The catalysed reaction is aldehydo-D-ribose 5-phosphate = D-ribulose 5-phosphate. It functions in the pathway carbohydrate degradation; pentose phosphate pathway; D-ribose 5-phosphate from D-ribulose 5-phosphate (non-oxidative stage): step 1/1. Catalyzes the reversible conversion of ribose-5-phosphate to ribulose 5-phosphate. This chain is Ribose-5-phosphate isomerase A, found in Chlamydia trachomatis serovar A (strain ATCC VR-571B / DSM 19440 / HAR-13).